Consider the following 131-residue polypeptide: Glycine cleavage system H protein (131 aa).

A Lipoyl-binding domain is found at 24–106 (TVRIGITDYA…YGEGWLVDLE (83 aa)). At K65 the chain carries N6-lipoyllysine.

Belongs to the GcvH family. The glycine cleavage system is composed of four proteins: P, T, L and H. Requires (R)-lipoate as cofactor.

Its function is as follows. The glycine cleavage system catalyzes the degradation of glycine. The H protein shuttles the methylamine group of glycine from the P protein to the T protein. The chain is Glycine cleavage system H protein from Mycobacteroides abscessus (strain ATCC 19977 / DSM 44196 / CCUG 20993 / CIP 104536 / JCM 13569 / NCTC 13031 / TMC 1543 / L948) (Mycobacterium abscessus).